The chain runs to 260 residues: MKTNGHFKDFAWKKCFLGASVVALLVGCSPHIIETNEVALKLNYHPASEKVQALDEKILLLRPAFQYSDNIAKEYENKFKNQTTLKVEEILQNQGYKVINVDSSDKDDFSFAQKKEGYLAVAMNGEIVLRPDPKRTIQKKSEPGLLFSTGLDKMEGVLIPAGFVKVTILEPMSGESLDSFTMDLSELDIQEKFLKTTHSSHSGGLVSTMVKGTDNSNDAIKSALNKIFASIMQEMDKKLTQRNLESYQKDAKELKNKRNR.

The first 27 residues, 1 to 27 (MKTNGHFKDFAWKKCFLGASVVALLVG), serve as a signal peptide directing secretion. The N-palmitoyl cysteine moiety is linked to residue cysteine 28. Residue cysteine 28 is the site of S-diacylglycerol cysteine attachment.

The protein resides in the cell outer membrane. The protein is Neuraminyllactose-binding hemagglutinin (hpaA) of Helicobacter pylori (strain J99 / ATCC 700824) (Campylobacter pylori J99).